The primary structure comprises 260 residues: Indole-3-glycerol phosphate synthase (260 aa).

This sequence belongs to the TrpC family.

It carries out the reaction 1-(2-carboxyphenylamino)-1-deoxy-D-ribulose 5-phosphate + H(+) = (1S,2R)-1-C-(indol-3-yl)glycerol 3-phosphate + CO2 + H2O. It participates in amino-acid biosynthesis; L-tryptophan biosynthesis; L-tryptophan from chorismate: step 4/5. The sequence is that of Indole-3-glycerol phosphate synthase from Staphylococcus saprophyticus subsp. saprophyticus (strain ATCC 15305 / DSM 20229 / NCIMB 8711 / NCTC 7292 / S-41).